The chain runs to 122 residues: Large ribosomal subunit protein bL12 (122 aa).

It belongs to the bacterial ribosomal protein bL12 family. Homodimer. Part of the ribosomal stalk of the 50S ribosomal subunit. Forms a multimeric L10(L12)X complex, where L10 forms an elongated spine to which 2 to 4 L12 dimers bind in a sequential fashion. Binds GTP-bound translation factors.

Forms part of the ribosomal stalk which helps the ribosome interact with GTP-bound translation factors. Is thus essential for accurate translation. The polypeptide is Large ribosomal subunit protein bL12 (Staphylococcus saprophyticus subsp. saprophyticus (strain ATCC 15305 / DSM 20229 / NCIMB 8711 / NCTC 7292 / S-41)).